Here is a 389-residue protein sequence, read N- to C-terminus: Succinyl-diaminopimelate desuccinylase (389 aa).

H75 lines the Zn(2+) pocket. Residue D77 is part of the active site. D108 provides a ligand contact to Zn(2+). The Proton acceptor role is filled by E142. E143, E171, and H357 together coordinate Zn(2+).

This sequence belongs to the peptidase M20A family. DapE subfamily. Homodimer. Zn(2+) serves as cofactor. The cofactor is Co(2+).

It catalyses the reaction N-succinyl-(2S,6S)-2,6-diaminopimelate + H2O = (2S,6S)-2,6-diaminopimelate + succinate. The protein operates within amino-acid biosynthesis; L-lysine biosynthesis via DAP pathway; LL-2,6-diaminopimelate from (S)-tetrahydrodipicolinate (succinylase route): step 3/3. Its function is as follows. Catalyzes the hydrolysis of N-succinyl-L,L-diaminopimelic acid (SDAP), forming succinate and LL-2,6-diaminopimelate (DAP), an intermediate involved in the bacterial biosynthesis of lysine and meso-diaminopimelic acid, an essential component of bacterial cell walls. The sequence is that of Succinyl-diaminopimelate desuccinylase from Paracidovorax citrulli (strain AAC00-1) (Acidovorax citrulli).